The chain runs to 316 residues: 4-hydroxy-3-methylbut-2-enyl diphosphate reductase (316 aa).

Position 12 (Cys12) interacts with [4Fe-4S] cluster. Residues His43 and His81 each coordinate (2E)-4-hydroxy-3-methylbut-2-enyl diphosphate. Dimethylallyl diphosphate is bound by residues His43 and His81. Positions 43 and 81 each coordinate isopentenyl diphosphate. Cys103 provides a ligand contact to [4Fe-4S] cluster. His131 lines the (2E)-4-hydroxy-3-methylbut-2-enyl diphosphate pocket. Position 131 (His131) interacts with dimethylallyl diphosphate. Isopentenyl diphosphate is bound at residue His131. Glu133 acts as the Proton donor in catalysis. (2E)-4-hydroxy-3-methylbut-2-enyl diphosphate is bound at residue Thr170. Residue Cys198 participates in [4Fe-4S] cluster binding. Positions 226, 228, and 271 each coordinate (2E)-4-hydroxy-3-methylbut-2-enyl diphosphate. Dimethylallyl diphosphate is bound by residues Ser226, Asn228, and Ser271. Isopentenyl diphosphate is bound by residues Ser226, Asn228, and Ser271.

The protein belongs to the IspH family. Requires [4Fe-4S] cluster as cofactor.

The enzyme catalyses isopentenyl diphosphate + 2 oxidized [2Fe-2S]-[ferredoxin] + H2O = (2E)-4-hydroxy-3-methylbut-2-enyl diphosphate + 2 reduced [2Fe-2S]-[ferredoxin] + 2 H(+). The catalysed reaction is dimethylallyl diphosphate + 2 oxidized [2Fe-2S]-[ferredoxin] + H2O = (2E)-4-hydroxy-3-methylbut-2-enyl diphosphate + 2 reduced [2Fe-2S]-[ferredoxin] + 2 H(+). It participates in isoprenoid biosynthesis; dimethylallyl diphosphate biosynthesis; dimethylallyl diphosphate from (2E)-4-hydroxy-3-methylbutenyl diphosphate: step 1/1. It functions in the pathway isoprenoid biosynthesis; isopentenyl diphosphate biosynthesis via DXP pathway; isopentenyl diphosphate from 1-deoxy-D-xylulose 5-phosphate: step 6/6. Catalyzes the conversion of 1-hydroxy-2-methyl-2-(E)-butenyl 4-diphosphate (HMBPP) into a mixture of isopentenyl diphosphate (IPP) and dimethylallyl diphosphate (DMAPP). Acts in the terminal step of the DOXP/MEP pathway for isoprenoid precursor biosynthesis. This Bacillus mycoides (strain KBAB4) (Bacillus weihenstephanensis) protein is 4-hydroxy-3-methylbut-2-enyl diphosphate reductase.